The chain runs to 93 residues: 3-isopropylmalate dehydratase small subunit (93 aa).

It belongs to the LeuD family. LeuD type 1 subfamily. As to quaternary structure, heterodimer of LeuC and LeuD.

The catalysed reaction is (2R,3S)-3-isopropylmalate = (2S)-2-isopropylmalate. It functions in the pathway amino-acid biosynthesis; L-leucine biosynthesis; L-leucine from 3-methyl-2-oxobutanoate: step 2/4. In terms of biological role, catalyzes the isomerization between 2-isopropylmalate and 3-isopropylmalate, via the formation of 2-isopropylmaleate. The protein is 3-isopropylmalate dehydratase small subunit (leuD) of Actinoplanes teichomyceticus.